The primary structure comprises 460 residues: Phosphomethylpyrimidine synthase (460 aa).

Residues N80, M109, Y139, H175, 195–197, 236–239, and E275 contribute to the substrate site; these read SRG and DSLR. A Zn(2+)-binding site is contributed by H279. Residue Y302 coordinates substrate. H343 is a binding site for Zn(2+). 3 residues coordinate [4Fe-4S] cluster: C423, C426, and C431.

Belongs to the ThiC family. It depends on [4Fe-4S] cluster as a cofactor.

The enzyme catalyses 5-amino-1-(5-phospho-beta-D-ribosyl)imidazole + S-adenosyl-L-methionine = 4-amino-2-methyl-5-(phosphooxymethyl)pyrimidine + CO + 5'-deoxyadenosine + formate + L-methionine + 3 H(+). Its pathway is cofactor biosynthesis; thiamine diphosphate biosynthesis. Its function is as follows. Catalyzes the synthesis of the hydroxymethylpyrimidine phosphate (HMP-P) moiety of thiamine from aminoimidazole ribotide (AIR) in a radical S-adenosyl-L-methionine (SAM)-dependent reaction. The protein is Phosphomethylpyrimidine synthase of Rippkaea orientalis (strain PCC 8801 / RF-1) (Cyanothece sp. (strain PCC 8801)).